Reading from the N-terminus, the 385-residue chain is Flap endonuclease 1 (385 aa).

Residues 1–104 (MGILGLSKLI…GELAKRAERR (104 aa)) are N-domain. A Mg(2+)-binding site is contributed by Asp34. The DNA site is built by Arg47 and Arg70. Positions 86, 158, 160, 179, and 181 each coordinate Mg(2+). The tract at residues 122–253 (GIEKFNRRLV…KRAIELINTY (132 aa)) is I-domain. DNA is bound at residue Glu158. Positions 231 and 233 each coordinate DNA. Mg(2+) is bound at residue Asp233. The tract at residues 336–344 (TQVRLDSFF) is interaction with PCNA. Positions 346–385 (TLPSTPNATNAAKRKADEAKKSANNKKAKTSGGGRGRRPK) are disordered. Positions 368 to 385 (ANNKKAKTSGGGRGRRPK) are enriched in basic residues.

Belongs to the XPG/RAD2 endonuclease family. FEN1 subfamily. As to quaternary structure, interacts with PCNA. Three molecules of FEN1 bind to one PCNA trimer with each molecule binding to one PCNA monomer. PCNA stimulates the nuclease activity without altering cleavage specificity. Mg(2+) is required as a cofactor. Post-translationally, phosphorylated. Phosphorylation upon DNA damage induces relocalization to the nuclear plasma.

Its subcellular location is the nucleus. It localises to the nucleolus. The protein localises to the nucleoplasm. The protein resides in the mitochondrion. Functionally, structure-specific nuclease with 5'-flap endonuclease and 5'-3' exonuclease activities involved in DNA replication and repair. During DNA replication, cleaves the 5'-overhanging flap structure that is generated by displacement synthesis when DNA polymerase encounters the 5'-end of a downstream Okazaki fragment. It enters the flap from the 5'-end and then tracks to cleave the flap base, leaving a nick for ligation. Also involved in the long patch base excision repair (LP-BER) pathway, by cleaving within the apurinic/apyrimidinic (AP) site-terminated flap. Acts as a genome stabilization factor that prevents flaps from equilibrating into structures that lead to duplications and deletions. Also possesses 5'-3' exonuclease activity on nicked or gapped double-stranded DNA, and exhibits RNase H activity. Also involved in replication and repair of rDNA and in repairing mitochondrial DNA. This Drosophila sechellia (Fruit fly) protein is Flap endonuclease 1.